The primary structure comprises 90 residues: Small ribosomal subunit protein uS15 (90 aa).

Belongs to the universal ribosomal protein uS15 family. As to quaternary structure, part of the 30S ribosomal subunit. Forms a bridge to the 50S subunit in the 70S ribosome, contacting the 23S rRNA.

Functionally, one of the primary rRNA binding proteins, it binds directly to 16S rRNA where it helps nucleate assembly of the platform of the 30S subunit by binding and bridging several RNA helices of the 16S rRNA. In terms of biological role, forms an intersubunit bridge (bridge B4) with the 23S rRNA of the 50S subunit in the ribosome. The sequence is that of Small ribosomal subunit protein uS15 from Aquifex aeolicus (strain VF5).